The following is a 677-amino-acid chain: Collagen alpha-2(IX) chain (677 aa).

A signal peptide spans M1–A21. Positions G25–I161 are triple-helical region 4 (COL4). Residues G28–V41 show a composition bias toward pro residues. The disordered stretch occupies residues G28 to R516. A compositionally biased stretch (low complexity) spans S53–P66. Positions A68 to K77 are enriched in pro residues. Residues G91–G100 are compositionally biased toward gly residues. Composition is skewed to pro residues over residues L104–L121 and K137–P158. Position 158 is a 4-hydroxyproline (P158). Residues Q162–P178 are nonhelical region 4 (NC4). O-linked (Xyl...) (glycosaminoglycan) serine glycosylation occurs at S167. P178 is modified (4-hydroxyproline). The triple-helical region 3 (COL3) stretch occupies residues G179–D517. K181 carries the 5-hydroxylysine modification. Residue K181 is glycosylated (O-linked (Gal...) hydroxylysine). K190 bears the Allysine mark. 3 stretches are compositionally biased toward low complexity: residues T363–P382, P430–P442, and R496–P505. A nonhelical region 3 (NC3) region spans residues A518–L547. Positions G548–A630 are triple-helical region 2 (COL2). A disordered region spans residues V550–G657. The segment covering P555–P565 has biased composition (pro residues). Residues K597–R609 show a composition bias toward basic and acidic residues. Residues L631–A632 are nonhelical region 2 (NC2). A triple-helical region 1 (COL1) region spans residues G633–C662. Residues E663–G677 are nonhelical region 1 (NC1).

Belongs to the fibril-associated collagens with interrupted helices (FACIT) family. As to quaternary structure, heterotrimer of an alpha 1(IX), an alpha 2(IX) and an alpha 3(IX) chain. The chains are linked to each other by interchain disulfide bonds. Trimers are also cross-linked via hydroxylysines. In terms of processing, covalently linked to the telopeptides of type II collagen by lysine-derived cross-links. Post-translationally, prolines at the third position of the tripeptide repeating unit (G-X-Y) are hydroxylated in some or all of the chains.

The protein localises to the secreted. It localises to the extracellular space. Its subcellular location is the extracellular matrix. Functionally, structural component of hyaline cartilage and vitreous of the eye. The polypeptide is Collagen alpha-2(IX) chain (COL9A2) (Gallus gallus (Chicken)).